We begin with the raw amino-acid sequence, 187 residues long: Benzene 1,2-dioxygenase subunit beta (187 aa).

It belongs to the bacterial ring-hydroxylating dioxygenase beta subunit family. In terms of assembly, this dioxygenase system consists of four proteins: the two subunits of the hydroxylase component (BedC1 and BedC2), a ferredoxin (BedB) and a ferredoxin reductase (BedA).

The enzyme catalyses benzene + NADH + O2 + H(+) = cis-1,2-dihydrobenzene-1,2-diol + NAD(+). It participates in aromatic compound metabolism; benzene degradation; catechol from benzene: step 1/2. Its function is as follows. The beta subunit may be responsible for the substrate specificity of the enzyme. The sequence is that of Benzene 1,2-dioxygenase subunit beta (bedC2) from Pseudomonas putida (Arthrobacter siderocapsulatus).